A 79-amino-acid polypeptide reads, in one-letter code: Large ribosomal subunit protein bL28 (79 aa).

It belongs to the bacterial ribosomal protein bL28 family.

This chain is Large ribosomal subunit protein bL28, found in Porphyromonas gingivalis (strain ATCC 33277 / DSM 20709 / CIP 103683 / JCM 12257 / NCTC 11834 / 2561).